We begin with the raw amino-acid sequence, 524 residues long: Zinc finger protein GLIS2 (524 aa).

The interaction with CTNND1 stretch occupies residues 35–174; sequence ALHRELGLVD…PKQLVCRWAK (140 aa). 2 disordered regions span residues 39–62 and 84–114; these read ELGLVDDSPTPGSPGSPPSGFLLN and SPPSGLDSPNGSSSLSPERQGNGDLPPVPSA. The interval 71–137 is transcription activation; sequence GRFSAAPLVD…SSFQFFLPLG (67 aa). A compositionally biased stretch (low complexity) spans 84 to 100; it reads SPPSGLDSPNGSSSLSP. A transcription repression region spans residues 148–171; sequence SFLTPPKDKCLSPDLPLPKQLVCR. The segment at 168–193 adopts a C2H2-type 1 zinc-finger fold; sequence LVCRWAKCNQLFELLQDLVDHVNDYH. Residues 202 to 229 form a C2H2-type 2; atypical zinc finger; sequence YCCHWEGCARHGRGFNARYKMLIHIRTH. 3 consecutive C2H2-type zinc fingers follow at residues 235–257, 263–287, and 293–317; these read HRCPTCSKSFSRLENLKIHNRSH, YVCPYEGCNKRYSNSSDRFKHTRTH, and YYCKMPGCHKRYTDPSSLRKHIKAH. A disordered region spans residues 439 to 480; the sequence is GGKAEGEKGRGSVPTRALGMEGHKTPLERTESSCSRPSPDGL. The segment covering 459–469 has biased composition (basic and acidic residues); it reads EGHKTPLERTE.

It belongs to the GLI C2H2-type zinc-finger protein family. As to quaternary structure, interacts with CTBP1 and HDAC3. Interacts with CTNNB1. Interacts with SUFU. Interacts with CTNND1. Post-translationally, C-terminus cleavage is induced by interaction with CTNND1 and enhanced by Src tyrosine kinase. Expressed at high levels in kidney and at low levels in heart, lung and placenta. Expressed in colon.

It localises to the nucleus speckle. It is found in the cytoplasm. Can act either as a transcriptional repressor or as a transcriptional activator, depending on the cell context. Acts as a repressor of the Hedgehog signaling pathway. Represses the Hedgehog-dependent expression of Wnt4. Necessary to maintain the differentiated epithelial phenotype in renal cells through the inhibition of SNAI1, which itself induces the epithelial-to-mesenchymal transition. Represses transcriptional activation mediated by CTNNB1 in the Wnt signaling pathway. May act by recruiting the corepressors CTBP1 and HDAC3. May be involved in neuron differentiation. The protein is Zinc finger protein GLIS2 (GLIS2) of Homo sapiens (Human).